Reading from the N-terminus, the 448-residue chain is Phosphoglucosamine mutase (448 aa).

Ser-104 functions as the Phosphoserine intermediate in the catalytic mechanism. The Mg(2+) site is built by Ser-104, Asp-245, Asp-247, and Asp-249. The residue at position 104 (Ser-104) is a Phosphoserine.

Belongs to the phosphohexose mutase family. Requires Mg(2+) as cofactor. In terms of processing, activated by phosphorylation.

It catalyses the reaction alpha-D-glucosamine 1-phosphate = D-glucosamine 6-phosphate. Catalyzes the conversion of glucosamine-6-phosphate to glucosamine-1-phosphate. This Caulobacter vibrioides (strain ATCC 19089 / CIP 103742 / CB 15) (Caulobacter crescentus) protein is Phosphoglucosamine mutase.